A 485-amino-acid chain; its full sequence is D-alanine--D-alanyl carrier protein ligase (485 aa).

Position 144-145 (144-145) interacts with ATP; that stretch reads TS. Residue aspartate 189 coordinates D-alanine. An ATP-binding site is contributed by 284–289; that stretch reads NTYGPT. Position 293 (valine 293) interacts with D-alanine. 2 residues coordinate ATP: aspartate 365 and lysine 473. Position 473 (lysine 473) interacts with D-alanine.

The protein belongs to the ATP-dependent AMP-binding enzyme family. DltA subfamily.

Its subcellular location is the cytoplasm. It catalyses the reaction holo-[D-alanyl-carrier protein] + D-alanine + ATP = D-alanyl-[D-alanyl-carrier protein] + AMP + diphosphate. The protein operates within cell wall biogenesis; lipoteichoic acid biosynthesis. In terms of biological role, catalyzes the first step in the D-alanylation of lipoteichoic acid (LTA), the activation of D-alanine and its transfer onto the D-alanyl carrier protein (Dcp) DltC. In an ATP-dependent two-step reaction, forms a high energy D-alanyl-AMP intermediate, followed by transfer of the D-alanyl residue as a thiol ester to the phosphopantheinyl prosthetic group of the Dcp. D-alanylation of LTA plays an important role in modulating the properties of the cell wall in Gram-positive bacteria, influencing the net charge of the cell wall. The sequence is that of D-alanine--D-alanyl carrier protein ligase from Staphylococcus aureus (strain Mu3 / ATCC 700698).